The chain runs to 560 residues: Protein DETOXIFICATION 45, chloroplastic (560 aa).

The N-terminal 75 residues, 1 to 75 (MESSRVVVGG…QTNPDCGVVK (75 aa)), are a transit peptide targeting the chloroplast. The next 12 helical transmembrane spans lie at 109–129 (LVMLSLPAIAGQAIDPLTLLM), 147–167 (VSMAIFNTISKLFNIPLLSVA), 209–229 (ALVLAIGIGIFEALALSLASG), 250–270 (FLVLRALGAPAYVVSLALQGI), 280–300 (PVYCLGIGNFLAVFLFPLFIY), 308–328 (GAAISSVISQYTVAILMLILL), 353–373 (FVLGRTLSVLVTMTVATSMAA), 389–411 (VWLAVSLLTDALASSGQALIASS), 426–446 (FVLKIGVVTGIALAIVLGMSF), 466–486 (GVLFVAATQPITALAFIFDGL), 495–515 (YAACSMMVVGGISSAFMLYAP), and 523–543 (VWVGLSMFMGLRMVAGFSRLM).

It belongs to the multi antimicrobial extrusion (MATE) (TC 2.A.66.1) family. Ubiquitous.

It is found in the plastid. The protein resides in the chloroplast membrane. The chain is Protein DETOXIFICATION 45, chloroplastic from Arabidopsis thaliana (Mouse-ear cress).